The chain runs to 276 residues: Undecaprenyl-diphosphatase 1 (276 aa).

The next 6 membrane-spanning stretches (helical) occupy residues 44–63, 85–105, 109–129, 183–203, 214–234, and 249–269; these read ALAF…IWEY, VNLL…ADLI, LFNP…MLWA, AATE…AVYS, GDFA…MLAV, and FAWY…LGMI.

Belongs to the UppP family.

The protein localises to the cell inner membrane. The catalysed reaction is di-trans,octa-cis-undecaprenyl diphosphate + H2O = di-trans,octa-cis-undecaprenyl phosphate + phosphate + H(+). Its function is as follows. Catalyzes the dephosphorylation of undecaprenyl diphosphate (UPP). Confers resistance to bacitracin. This Stutzerimonas stutzeri (strain A1501) (Pseudomonas stutzeri) protein is Undecaprenyl-diphosphatase 1.